Here is a 442-residue protein sequence, read N- to C-terminus: MVDVNENPFDGTDSIFERKQPLKKDTFTPDTIFHRDEEIEFYINALQDVIVGHDPNNVFVYGPTGVGKTAVTKWVRDKLEEKAEAEDIPLTVVGPINCRNYRSAYALVNTLVNEFRDPENQLPESGYSTDSVFEFLYEEIEAVGGNVLIILDEIDNIPADARNDFLYELPRAEANENTPITDAKVGLIGISNDLKFVDVLEPKVKSTLGEREIKFGPYDATELRDILGYYADIAFREDVLGEDVVPLAAAFSAQERGDVRQGLRILEKAGEYARMEGAEGVTEAHTRRATDTIETDELLDYFEHDLSSQQALTYLATTLALIEPKHEASTKRIYNLYSSIAESSGRRVKSERKIYEFLDQLSMQGLVRSAERNLGRKGGRKYIYEVTDDPTDIINAALQSSYSDAVPSNVNGILEHYLEDEATEFEAPDTTDDEQQNLWQFT.

Residues 66 to 70 and Y218 each bind ATP; that span reads VGKTA.

Belongs to the CDC6/cdc18 family.

Involved in regulation of DNA replication. The protein is ORC1-type DNA replication protein 8 (cdc6h) of Haloarcula marismortui (strain ATCC 43049 / DSM 3752 / JCM 8966 / VKM B-1809) (Halobacterium marismortui).